We begin with the raw amino-acid sequence, 273 residues long: Polyamine aminopropyltransferase (273 aa).

In terms of domain architecture, PABS spans 5–238 (ENWFSERYSD…GFWSFTVASP (234 aa)). Residue Gln-34 participates in S-methyl-5'-thioadenosine binding. Residues His-65 and Asp-90 each contribute to the spermidine site. S-methyl-5'-thioadenosine contacts are provided by residues Glu-109 and 140–141 (DG). Asp-158 functions as the Proton acceptor in the catalytic mechanism. 158–161 (DSTD) is a spermidine binding site. An S-methyl-5'-thioadenosine-binding site is contributed by Pro-165.

The protein belongs to the spermidine/spermine synthase family. As to quaternary structure, homodimer or homotetramer.

Its subcellular location is the cytoplasm. The catalysed reaction is S-adenosyl 3-(methylsulfanyl)propylamine + putrescine = S-methyl-5'-thioadenosine + spermidine + H(+). The protein operates within amine and polyamine biosynthesis; spermidine biosynthesis; spermidine from putrescine: step 1/1. In terms of biological role, catalyzes the irreversible transfer of a propylamine group from the amino donor S-adenosylmethioninamine (decarboxy-AdoMet) to putrescine (1,4-diaminobutane) to yield spermidine. The chain is Polyamine aminopropyltransferase from Thermoplasma acidophilum (strain ATCC 25905 / DSM 1728 / JCM 9062 / NBRC 15155 / AMRC-C165).